Here is a 260-residue protein sequence, read N- to C-terminus: Indole-3-glycerol phosphate synthase (260 aa).

Belongs to the TrpC family.

It catalyses the reaction 1-(2-carboxyphenylamino)-1-deoxy-D-ribulose 5-phosphate + H(+) = (1S,2R)-1-C-(indol-3-yl)glycerol 3-phosphate + CO2 + H2O. It functions in the pathway amino-acid biosynthesis; L-tryptophan biosynthesis; L-tryptophan from chorismate: step 4/5. This Staphylococcus aureus (strain MRSA252) protein is Indole-3-glycerol phosphate synthase.